Consider the following 251-residue polypeptide: MTRRKKIYEGKAKILYEGPEPGTLIQYFKDDTTAFDATKKAVLEGKGVINNRISEYIMTKLNSIGVQNHFIKRLNLREQLIREVEIIPLEVVCRNVAAGSLSKRFGLPEGQALPRSIIEFYLKDDKLHDPMVAEEHITAFNWASTQEIDDMMALTLRVNDFLTGLFSGVGITLVDFKIEFGRIWENDFSRIILADEISPDSCRLWDSQTNEKLDKDRFRRDLGNVIESYTEVARRLGIMKEMPTVIQGGLH.

The protein belongs to the SAICAR synthetase family.

It catalyses the reaction 5-amino-1-(5-phospho-D-ribosyl)imidazole-4-carboxylate + L-aspartate + ATP = (2S)-2-[5-amino-1-(5-phospho-beta-D-ribosyl)imidazole-4-carboxamido]succinate + ADP + phosphate + 2 H(+). It participates in purine metabolism; IMP biosynthesis via de novo pathway; 5-amino-1-(5-phospho-D-ribosyl)imidazole-4-carboxamide from 5-amino-1-(5-phospho-D-ribosyl)imidazole-4-carboxylate: step 1/2. This Phenylobacterium zucineum (strain HLK1) protein is Phosphoribosylaminoimidazole-succinocarboxamide synthase.